Consider the following 410-residue polypeptide: Elongation factor Tu, chloroplastic (410 aa).

Residues 10–215 form the tr-type G domain; it reads KPHVNIGTIG…NVDSYIPTPE (206 aa). The segment at 19–26 is G1; sequence GHVDHGKT. Residue 19–26 participates in GTP binding; sequence GHVDHGKT. Threonine 26 contributes to the Mg(2+) binding site. The tract at residues 61 to 65 is G2; the sequence is GITIN. The G3 stretch occupies residues 82–85; that stretch reads DCPG. Residues 82 to 86 and 137 to 140 each bind GTP; these read DCPGH and NKKD. A G4 region spans residues 137 to 140; that stretch reads NKKD. Positions 175–177 are G5; the sequence is SAL.

The protein belongs to the TRAFAC class translation factor GTPase superfamily. Classic translation factor GTPase family. EF-Tu/EF-1A subfamily.

It is found in the plastid. It localises to the chloroplast. It catalyses the reaction GTP + H2O = GDP + phosphate + H(+). Functionally, GTP hydrolase that promotes the GTP-dependent binding of aminoacyl-tRNA to the A-site of ribosomes during protein biosynthesis. This Oltmannsiellopsis viridis (Marine flagellate) protein is Elongation factor Tu, chloroplastic (tufA).